Consider the following 1774-residue polypeptide: Receptor-mediated endocytosis protein 6 homolog (1774 aa).

One can recognise a Ras-GAP domain in the interval 157–396 (ELLLKLLREL…EDVVAILPQQ (240 aa)). Disordered regions lie at residues 444 to 480 (IPKQ…NNRS), 517 to 564 (PLAN…PAPT), 661 to 727 (AAHS…HHHG), 784 to 811 (ENTL…RNFS), 869 to 947 (AEID…EDSA), 983 to 1102 (ESSF…EEQP), 1115 to 1142 (QEEQ…SMEQ), and 1214 to 1342 (RAGA…GGRS). Low complexity-rich tracts occupy residues 519–533 (ANGQ…SASN) and 540–557 (SSHS…AAPA). Positions 674–683 (QQERDVHENE) are enriched in basic and acidic residues. The span at 688–713 (DMVSANVSGRGTPNISGRDTPSSQVT) shows a compositional bias: polar residues. Positions 794–809 (RGGDRGDRGDRDRDRN) are enriched in basic and acidic residues. A compositionally biased stretch (gly residues) spans 887 to 905 (PGSGGGAGVPEAGGGGGVV). Residues 929-944 (DPDRERLRNGSERSQE) are compositionally biased toward basic and acidic residues. Polar residues predominate over residues 1011 to 1027 (MRRQTSAESSISNQSLN). The segment covering 1038–1047 (LAKHHHHHQH) has biased composition (basic residues). The segment covering 1048 to 1060 (RDRDRDRDRDRDH) has biased composition (basic and acidic residues). The span at 1061–1076 (REHHHKSAALKKKKHQ) shows a compositional bias: basic residues. Residues 1077–1087 (EHKEHQHRDLI) are compositionally biased toward basic and acidic residues. The span at 1091-1101 (DCSEDKDEEEQ) shows a compositional bias: acidic residues. Residues 1115–1125 (QEEQQQQQQQQ) are compositionally biased toward low complexity. The segment covering 1246–1291 (SADKEQQPYRDRERERDRERDRERDRDRERDRDRDRDRDRDREHHS) has biased composition (basic and acidic residues). Low complexity predominate over residues 1310–1335 (SSSSKNNAIAIAAPSSINPNPSPSSA). A coiled-coil region spans residues 1516-1546 (RHRQQLLLRSEQLEQLEVRLRSEARSCQRCL). A VPS9 domain is found at 1635–1774 (VSRDTVLSAH…KFIKTMDYLD (140 aa)).

It belongs to the GAPVD1 family.

It is found in the membrane. Acts both as a GTPase-activating protein (GAP) and a guanine nucleotide exchange factor (GEF), and participates in endocytosis. This Drosophila pseudoobscura pseudoobscura (Fruit fly) protein is Receptor-mediated endocytosis protein 6 homolog.